Consider the following 750-residue polypeptide: Putative tyrosine-protein kinase EpsB (750 aa).

Topologically, residues Met1 to Arg31 are cytoplasmic. The helical transmembrane segment at Trp32–Ala52 threads the bilayer. Residues Arg53–Lys444 lie on the Periplasmic side of the membrane. A helical transmembrane segment spans residues Leu445 to Val465. At Arg466–Ala750 the chain is on the cytoplasmic side.

It belongs to the etk/wzc family.

The protein localises to the cell inner membrane. The catalysed reaction is L-tyrosyl-[protein] + ATP = O-phospho-L-tyrosyl-[protein] + ADP + H(+). Functionally, probably involved in polymerization and/or export of exopolysaccharide EPS I which functions as a virulence factor. May be involved in an ATP-dependent process in the pathway for EPS I production, possibly export of the trimeric repeat units across the inner membrane or their polymerization. The protein is Putative tyrosine-protein kinase EpsB (epsB) of Ralstonia solanacearum (Pseudomonas solanacearum).